Here is a 180-residue protein sequence, read N- to C-terminus: Peptide deformylase (180 aa).

Residues C88 and H130 each contribute to the Fe cation site. Residue E131 is part of the active site. H134 lines the Fe cation pocket.

The protein belongs to the polypeptide deformylase family. Fe(2+) serves as cofactor.

The catalysed reaction is N-terminal N-formyl-L-methionyl-[peptide] + H2O = N-terminal L-methionyl-[peptide] + formate. Its function is as follows. Removes the formyl group from the N-terminal Met of newly synthesized proteins. Requires at least a dipeptide for an efficient rate of reaction. N-terminal L-methionine is a prerequisite for activity but the enzyme has broad specificity at other positions. The sequence is that of Peptide deformylase from Acidothermus cellulolyticus (strain ATCC 43068 / DSM 8971 / 11B).